The following is a 218-amino-acid chain: Molybdenum cofactor guanylyltransferase (218 aa).

Residues 16 to 18 (LAG), Lys28, Asn56, Asp74, and Asp109 each bind GTP. Mg(2+) is bound at residue Asp109.

Belongs to the MobA family. Monomer. Mg(2+) serves as cofactor.

The protein localises to the cytoplasm. The enzyme catalyses Mo-molybdopterin + GTP + H(+) = Mo-molybdopterin guanine dinucleotide + diphosphate. Transfers a GMP moiety from GTP to Mo-molybdopterin (Mo-MPT) cofactor (Moco or molybdenum cofactor) to form Mo-molybdopterin guanine dinucleotide (Mo-MGD) cofactor. In Rhizobium meliloti (strain 1021) (Ensifer meliloti), this protein is Molybdenum cofactor guanylyltransferase.